Consider the following 541-residue polypeptide: ATP synthase subunit alpha (541 aa).

169-176 lines the ATP pocket; sequence GDRQTGKT. Positions 506–541 are disordered; that stretch reads NTLLNVEEGDTGEEENNEGHNKAEQDTEEKDTEEVV. Acidic residues-rich tracts occupy residues 512–521 and 531–541; these read EEGDTGEEEN and DTEEKDTEEVV.

Belongs to the ATPase alpha/beta chains family. As to quaternary structure, F-type ATPases have 2 components, CF(1) - the catalytic core - and CF(0) - the membrane proton channel. CF(1) has five subunits: alpha(3), beta(3), gamma(1), delta(1), epsilon(1). CF(0) has three main subunits: a(1), b(2) and c(9-12). The alpha and beta chains form an alternating ring which encloses part of the gamma chain. CF(1) is attached to CF(0) by a central stalk formed by the gamma and epsilon chains, while a peripheral stalk is formed by the delta and b chains.

Its subcellular location is the cell inner membrane. The enzyme catalyses ATP + H2O + 4 H(+)(in) = ADP + phosphate + 5 H(+)(out). Functionally, produces ATP from ADP in the presence of a proton gradient across the membrane. The alpha chain is a regulatory subunit. This is ATP synthase subunit alpha from Halothermothrix orenii (strain H 168 / OCM 544 / DSM 9562).